The sequence spans 470 residues: Bifunctional protein ArgHA (470 aa).

The tract at residues 1–470 is argininosuccinate lyase; it reads MALWGGRFSQ…TSGISIRAAR (470 aa).

This sequence in the N-terminal section; belongs to the lyase 1 family. Argininosuccinate lyase subfamily. The protein in the C-terminal section; belongs to the acetyltransferase family. ArgA subfamily.

It localises to the cytoplasm. The enzyme catalyses 2-(N(omega)-L-arginino)succinate = fumarate + L-arginine. It carries out the reaction L-glutamate + acetyl-CoA = N-acetyl-L-glutamate + CoA + H(+). Its pathway is amino-acid biosynthesis; L-arginine biosynthesis; N(2)-acetyl-L-ornithine from L-glutamate: step 1/4. It participates in amino-acid biosynthesis; L-arginine biosynthesis; L-arginine from L-ornithine and carbamoyl phosphate: step 3/3. The protein is Bifunctional protein ArgHA (argHA) of Moritella profunda.